Here is a 552-residue protein sequence, read N- to C-terminus: Indole-3-pyruvate decarboxylase (552 aa).

E52 provides a ligand contact to thiamine diphosphate. A thiamine pyrophosphate binding region spans residues 385–466 (TSAFGAIDLR…ILVLNNEGYT (82 aa)). The Mg(2+) site is built by D435 and N462.

Belongs to the TPP enzyme family. In terms of assembly, homotetramer. The cofactor is a metal cation. Requires thiamine diphosphate as cofactor.

It catalyses the reaction indole-3-pyruvate + H(+) = indole-3-acetaldehyde + CO2. It functions in the pathway plant hormone metabolism; auxin biosynthesis. The sequence is that of Indole-3-pyruvate decarboxylase (ipdC) from Enterobacter cloacae.